Here is a 922-residue protein sequence, read N- to C-terminus: Translation initiation factor IF-2 (922 aa).

The tract at residues 33–310 (KTASSTVQPP…SKRQKRNEYE (278 aa)) is disordered. Positions 75–87 (PAAKAAPKAAAKP) are enriched in low complexity. Composition is skewed to pro residues over residues 88 to 98 (GPKPGPKPGPQ) and 140 to 150 (TPKPGAKPGPK). Composition is skewed to low complexity over residues 151 to 169 (PGGA…GRAP) and 202 to 211 (PGSRPGGAKK). Gly residues-rich tracts occupy residues 215-225 (KPGGAKQGGGR) and 248-292 (FGGG…GRPG). Basic residues predominate over residues 296–305 (RKGRKSKRQK). The tr-type G domain maps to 418–590 (QRPPVVTVMG…VLLTADASLD (173 aa)). A G1 region spans residues 427 to 434 (GHVDHGKT). 427-434 (GHVDHGKT) contacts GTP. The segment at 452–456 (GITQH) is G2. Positions 477–480 (DTPG) are G3. GTP is bound by residues 477–481 (DTPGH) and 531–534 (NKID). A G4 region spans residues 531-534 (NKID). The interval 567–569 (SAK) is G5.

Belongs to the TRAFAC class translation factor GTPase superfamily. Classic translation factor GTPase family. IF-2 subfamily.

Its subcellular location is the cytoplasm. Functionally, one of the essential components for the initiation of protein synthesis. Protects formylmethionyl-tRNA from spontaneous hydrolysis and promotes its binding to the 30S ribosomal subunits. Also involved in the hydrolysis of GTP during the formation of the 70S ribosomal complex. This Corynebacterium jeikeium (strain K411) protein is Translation initiation factor IF-2.